The chain runs to 536 residues: Casein kinase I homolog RAG8 (536 aa).

The span at 26–42 (HSTQVLHGSGQHGMQPS) shows a compositional bias: polar residues. The segment at 26 to 68 (HSTQVLHGSGQHGMQPSGNNVLNGLANGATGLQSSASSTSTRD) is disordered. The segment covering 43-65 (GNNVLNGLANGATGLQSSASSTS) has biased composition (low complexity). Residues 77-361 (YKIGKKIGEG…QKLDGEYDWM (285 aa)) form the Protein kinase domain. ATP is bound by residues 83–91 (IGEGSFGVL) and Lys106. The active-site Proton acceptor is Asp196. Composition is skewed to polar residues over residues 407-420 (NNLN…QSHS) and 427-436 (DLTQGVSNAP). The segment at 407 to 524 (NNLNGSNVPL…NGKVQVADSN (118 aa)) is disordered. Low complexity-rich tracts occupy residues 437-453 (QQPQ…QHTQ) and 463-514 (AYKQ…NQPQ). Residues Cys535 and Cys536 are each lipidated (S-palmitoyl cysteine).

The protein belongs to the protein kinase superfamily. CK1 Ser/Thr protein kinase family. Casein kinase I subfamily.

The enzyme catalyses L-seryl-[protein] + ATP = O-phospho-L-seryl-[protein] + ADP + H(+). It carries out the reaction L-threonyl-[protein] + ATP = O-phospho-L-threonyl-[protein] + ADP + H(+). Its function is as follows. Casein kinases are operationally defined by their preferential utilization of acidic proteins such as caseins as substrates. In Kluyveromyces lactis (strain ATCC 8585 / CBS 2359 / DSM 70799 / NBRC 1267 / NRRL Y-1140 / WM37) (Yeast), this protein is Casein kinase I homolog RAG8 (RAG8).